The sequence spans 282 residues: Farnesyl diphosphate synthase (282 aa).

Isopentenyl diphosphate contacts are provided by K45, R48, and H77. 2 residues coordinate Mg(2+): D84 and D90. R95 is a binding site for (2E)-geranyl diphosphate. R96 provides a ligand contact to isopentenyl diphosphate. The (2E)-geranyl diphosphate site is built by K181, T182, and Q220.

It belongs to the FPP/GGPP synthase family. It depends on Mg(2+) as a cofactor.

Its subcellular location is the cytoplasm. It catalyses the reaction isopentenyl diphosphate + (2E)-geranyl diphosphate = (2E,6E)-farnesyl diphosphate + diphosphate. The chain is Farnesyl diphosphate synthase (ispA) from Buchnera aphidicola subsp. Acyrthosiphon pisum (strain APS) (Acyrthosiphon pisum symbiotic bacterium).